Reading from the N-terminus, the 150-residue chain is Deoxyuridine 5'-triphosphate nucleotidohydrolase (150 aa).

Substrate is bound by residues 70-72 (RSG), Asn-82, 86-88 (LID), and Met-96.

This sequence belongs to the dUTPase family. Mg(2+) is required as a cofactor.

It carries out the reaction dUTP + H2O = dUMP + diphosphate + H(+). It functions in the pathway pyrimidine metabolism; dUMP biosynthesis; dUMP from dCTP (dUTP route): step 2/2. Functionally, this enzyme is involved in nucleotide metabolism: it produces dUMP, the immediate precursor of thymidine nucleotides and it decreases the intracellular concentration of dUTP so that uracil cannot be incorporated into DNA. The protein is Deoxyuridine 5'-triphosphate nucleotidohydrolase of Baumannia cicadellinicola subsp. Homalodisca coagulata.